Here is a 439-residue protein sequence, read N- to C-terminus: MAEAAAASTAAPAVIGGWTKHVTCRYFMHGLCKEGENCRYSHDLSSCKQTMICKFFQKGCCAFGDRCRYEHTKPSKQDEVPSSKPSMPLTAAPLAGTPEPVSDGPGGTTGAQEKPQGSGAVDWVNAAEFVPGQPYCGRADPVLCEGPGPLIEEEYEKEQANKEMKKQLCPYAAVGECRYGLNCAYLHGDVCDMCGLQVLHPSDTSQRSQHIRACIEAHEKDMEISFAIQRSKDMMCGVCMEVVFEKTNPSERRFGILSNCCHCYCLKCIRKWRSAKQFESKIIKSCPECRITSNFVIPSEYWVEDKEEKQQLIQKYKDGMGTKPCRYFDEGRGTCPFGANCFYKHAFPDGRLEEPQPQRRQNGSNGRNRNTRRTHLWDLLDERENSDSFDNEDEEMVRFELSEMLLMLLAAGTDDDVTDSEDEWDLFHEELDDYYELYL.

3 consecutive C3H1-type zinc fingers follow at residues 18–45 (WTKHVTCRYFMHGLCKEGENCRYSHDLS), 48–74 (KQTMICKFFQKGCCAFGDRCRYEHTKP), and 163–190 (EMKKQLCPYAAVGECRYGLNCAYLHGDV). Positions 73-118 (KPSKQDEVPSSKPSMPLTAAPLAGTPEPVSDGPGGTTGAQEKPQGS) are disordered. The makorin-type Cys-His stretch occupies residues 191–218 (CDMCGLQVLHPSDTSQRSQHIRACIEAH). The RING-type zinc finger occupies 236–290 (CGVCMEVVFEKTNPSERRFGILSNCCHCYCLKCIRKWRSAKQFESKIIKSCPECR). Residues 319 to 348 (GMGTKPCRYFDEGRGTCPFGANCFYKHAFP) form a C3H1-type 4 zinc finger. Residues 352-371 (LEEPQPQRRQNGSNGRNRNT) form a disordered region. Over residues 358–368 (QRRQNGSNGRN) the composition is skewed to low complexity.

It carries out the reaction S-ubiquitinyl-[E2 ubiquitin-conjugating enzyme]-L-cysteine + [acceptor protein]-L-lysine = [E2 ubiquitin-conjugating enzyme]-L-cysteine + N(6)-ubiquitinyl-[acceptor protein]-L-lysine.. It participates in protein modification; protein ubiquitination. E3 ubiquitin ligase catalyzing the covalent attachment of ubiquitin moieties onto substrate proteins. This chain is Probable E3 ubiquitin-protein ligase makorin-1, found in Danio rerio (Zebrafish).